Reading from the N-terminus, the 75-residue chain is Pi-hexatoxin-Hi1b (75 aa).

Cystine bridges form between cysteine 3/cysteine 18, cysteine 10/cysteine 23, cysteine 17/cysteine 33, cysteine 40/cysteine 55, cysteine 47/cysteine 60, and cysteine 54/cysteine 71. 2 Domain repeats span residues 3-33 and 40-71; these read CIRKWLSCVDRKNDCCEGLECYKRRHSFEVC and CLVKWKQCDGRERDCCPGLECWKRSGNKSSVC. The interval 3–71 is 2 X approximate repeats with cysteine pattern C-C-CC-C-C; it reads CIRKWLSCVD…KRSGNKSSVC (69 aa).

It belongs to the psalmotoxin-1 family. Double-knot toxin subfamily. In terms of tissue distribution, expressed by the venom gland.

The protein resides in the secreted. In terms of biological role, this toxin potently and selectively inhibits ASIC1a, an isoform of the gene ASIC1. It incompletely inhibits ASIC1a activation in a pH-independent and slowly reversible manner. This toxin acts by binding to and stabilizing the closed state of the channel, thereby impeding the transition into a conducting state. This toxin may bind to the acidic pocket of ASIC1a, since mutation of a key residue of this pocket (Arg-350) abolishes the ability of the toxin to inhibit ASIC1a. In vivo, this toxin protects the brain from neuronal injury when administered up to 8 hours after stroke onset. The chain is Pi-hexatoxin-Hi1b from Hadronyche infensa (Fraser island funnel-web spider).